A 243-amino-acid polypeptide reads, in one-letter code: tRNA (guanine-N(1)-)-methyltransferase (243 aa).

S-adenosyl-L-methionine is bound by residues Gly110 and 130–135; that span reads VGDYVM.

The protein belongs to the RNA methyltransferase TrmD family. Homodimer.

It localises to the cytoplasm. It catalyses the reaction guanosine(37) in tRNA + S-adenosyl-L-methionine = N(1)-methylguanosine(37) in tRNA + S-adenosyl-L-homocysteine + H(+). Specifically methylates guanosine-37 in various tRNAs. The protein is tRNA (guanine-N(1)-)-methyltransferase of Treponema denticola (strain ATCC 35405 / DSM 14222 / CIP 103919 / JCM 8153 / KCTC 15104).